Consider the following 898-residue polypeptide: Protein kintoun (898 aa).

2 disordered regions span residues 558 to 680 (GELK…VESD) and 765 to 822 (ILGQ…SGIS). Positions 575 to 602 (INTRTVEDDTKVAKENVKKVDQETAHEG) are enriched in basic and acidic residues. Over residues 603–616 (KKSKKNQRRKNKKR) the composition is skewed to basic residues. Residues 641–656 (NEANSFEGTGSSSEAT) are compositionally biased toward polar residues.

It belongs to the PIH1 family. Kintoun subfamily.

The protein resides in the cytoplasm. Functionally, required for cytoplasmic pre-assembly of axonemal dyneins, thereby playing a central role in motility in cilia and flagella. Involved in pre-assembly of dynein arm complexes in the cytoplasm before intraflagellar transport loads them for the ciliary compartment. This chain is Protein kintoun, found in Aedes aegypti (Yellowfever mosquito).